The following is a 360-amino-acid chain: Phospho-N-acetylmuramoyl-pentapeptide-transferase (360 aa).

10 helical membrane passes run 26–46 (AIVSLLTALFISLWMGPRMIA), 72–92 (PTMGGIMILTSITVSVLLWAY), 94–114 (SNPYVWCVLFVLVGYGIVGFV), 132–152 (WKYFWQSAIALVVAFVMYMIG), 168–188 (VMPQLGLLYLLLAYFVIVGTS), 199–219 (GLAIMPTVFVAAGFALVAWAT), 236–256 (AGELVIVCTAIVGAGLGFLWF), 263–283 (VFMGDVGSLALGGALGTIAVL), 288–308 (FLLVIMGGVFVVETLSVILQV), and 338–358 (VIVRFWIISLMLVLIGLATLK).

Belongs to the glycosyltransferase 4 family. MraY subfamily. The cofactor is Mg(2+).

It is found in the cell inner membrane. It catalyses the reaction UDP-N-acetyl-alpha-D-muramoyl-L-alanyl-gamma-D-glutamyl-meso-2,6-diaminopimeloyl-D-alanyl-D-alanine + di-trans,octa-cis-undecaprenyl phosphate = di-trans,octa-cis-undecaprenyl diphospho-N-acetyl-alpha-D-muramoyl-L-alanyl-D-glutamyl-meso-2,6-diaminopimeloyl-D-alanyl-D-alanine + UMP. It functions in the pathway cell wall biogenesis; peptidoglycan biosynthesis. Its function is as follows. Catalyzes the initial step of the lipid cycle reactions in the biosynthesis of the cell wall peptidoglycan: transfers peptidoglycan precursor phospho-MurNAc-pentapeptide from UDP-MurNAc-pentapeptide onto the lipid carrier undecaprenyl phosphate, yielding undecaprenyl-pyrophosphoryl-MurNAc-pentapeptide, known as lipid I. The chain is Phospho-N-acetylmuramoyl-pentapeptide-transferase from Erwinia tasmaniensis (strain DSM 17950 / CFBP 7177 / CIP 109463 / NCPPB 4357 / Et1/99).